Reading from the N-terminus, the 107-residue chain is Integration host factor subunit beta (107 aa).

The tract at residues 76 to 107 (FVPHFKPGKELRERVDGRAGEPLKADDPDDDR) is disordered. A compositionally biased stretch (basic and acidic residues) spans 82–101 (PGKELRERVDGRAGEPLKAD).

This sequence belongs to the bacterial histone-like protein family. As to quaternary structure, heterodimer of an alpha and a beta chain.

This protein is one of the two subunits of integration host factor, a specific DNA-binding protein that functions in genetic recombination as well as in transcriptional and translational control. This chain is Integration host factor subunit beta, found in Burkholderia cenocepacia (strain HI2424).